Consider the following 418-residue polypeptide: Tyrosine--tRNA ligase (418 aa).

Tyrosine 34 serves as a coordination point for L-tyrosine. A 'HIGH' region motif is present at residues 39–48; it reads PTGDSMHIGH. Positions 166 and 170 each coordinate L-tyrosine. The short motif at 228–232 is the 'KMSKS' region element; that stretch reads KFGKT. Lysine 231 is an ATP binding site. Residues 350-417 form the S4 RNA-binding domain; sequence TNIVELLTET…KKNYFLAKVK (68 aa).

The protein belongs to the class-I aminoacyl-tRNA synthetase family. TyrS type 1 subfamily. As to quaternary structure, homodimer.

The protein resides in the cytoplasm. It carries out the reaction tRNA(Tyr) + L-tyrosine + ATP = L-tyrosyl-tRNA(Tyr) + AMP + diphosphate + H(+). Catalyzes the attachment of tyrosine to tRNA(Tyr) in a two-step reaction: tyrosine is first activated by ATP to form Tyr-AMP and then transferred to the acceptor end of tRNA(Tyr). The polypeptide is Tyrosine--tRNA ligase (Levilactobacillus brevis (Lactobacillus brevis)).